The following is a 209-amino-acid chain: Large ribosomal subunit protein uL3 (209 aa).

It belongs to the universal ribosomal protein uL3 family. In terms of assembly, part of the 50S ribosomal subunit. Forms a cluster with proteins L14 and L19.

Its function is as follows. One of the primary rRNA binding proteins, it binds directly near the 3'-end of the 23S rRNA, where it nucleates assembly of the 50S subunit. The chain is Large ribosomal subunit protein uL3 from Desulfotalea psychrophila (strain LSv54 / DSM 12343).